We begin with the raw amino-acid sequence, 61 residues long: Small ribosomal subunit protein uS14 (61 aa).

Zn(2+) contacts are provided by Cys-24, Cys-27, Cys-40, and Cys-43.

Belongs to the universal ribosomal protein uS14 family. Zinc-binding uS14 subfamily. As to quaternary structure, part of the 30S ribosomal subunit. Contacts proteins S3 and S10. Zn(2+) serves as cofactor.

Binds 16S rRNA, required for the assembly of 30S particles and may also be responsible for determining the conformation of the 16S rRNA at the A site. This Thermus thermophilus (strain ATCC BAA-163 / DSM 7039 / HB27) protein is Small ribosomal subunit protein uS14.